The chain runs to 234 residues: LexA repressor (234 aa).

Positions 1-11 (MNEATSHEGPK) are enriched in basic and acidic residues. Positions 1–34 (MNEATSHEGPKRSLPGRPPGIRADSSGLTDRQRR) are disordered. The H-T-H motif DNA-binding region spans 52–72 (MREIGQAVGLSSTSSVAHQLM). Residues 83–94 (DPHRPRAYEVRG) show a composition bias toward basic and acidic residues. Positions 83–109 (DPHRPRAYEVRGSDQSSSVQPTDTAGK) are disordered. Residues 95–105 (SDQSSSVQPTD) show a composition bias toward polar residues. Residues S158 and K195 each act as for autocatalytic cleavage activity in the active site.

The protein belongs to the peptidase S24 family. In terms of assembly, homodimer.

It catalyses the reaction Hydrolysis of Ala-|-Gly bond in repressor LexA.. Functionally, represses a number of genes involved in the response to DNA damage (SOS response), including recA and lexA. In the presence of single-stranded DNA, RecA interacts with LexA causing an autocatalytic cleavage which disrupts the DNA-binding part of LexA, leading to derepression of the SOS regulon and eventually DNA repair. In Streptomyces avermitilis (strain ATCC 31267 / DSM 46492 / JCM 5070 / NBRC 14893 / NCIMB 12804 / NRRL 8165 / MA-4680), this protein is LexA repressor.